The following is a 132-amino-acid chain: Protein NrdI (132 aa).

It belongs to the NrdI family.

In terms of biological role, probably involved in ribonucleotide reductase function. The protein is Protein NrdI of Bartonella henselae (strain ATCC 49882 / DSM 28221 / CCUG 30454 / Houston 1) (Rochalimaea henselae).